The primary structure comprises 456 residues: Bifunctional protein GlmU (456 aa).

Residues 1–229 form a pyrophosphorylase region; sequence MLNNAMSVVI…LSEVEGVNNR (229 aa). UDP-N-acetyl-alpha-D-glucosamine-binding positions include 11 to 14, lysine 25, glutamine 76, 81 to 82, 103 to 105, glycine 140, glutamate 154, asparagine 169, and asparagine 227; these read LAAG, GT, and YGD. Residue aspartate 105 coordinates Mg(2+). A Mg(2+)-binding site is contributed by asparagine 227. Residues 230-250 are linker; sequence LQLSRLERVYQFEQAEKLLLA. Residues 251-456 form an N-acetyltransferase region; that stretch reads GVMLRDPARF…EGWRRPVKKK (206 aa). Residues arginine 333 and lysine 351 each contribute to the UDP-N-acetyl-alpha-D-glucosamine site. Histidine 363 functions as the Proton acceptor in the catalytic mechanism. 2 residues coordinate UDP-N-acetyl-alpha-D-glucosamine: tyrosine 366 and asparagine 377. Acetyl-CoA is bound by residues alanine 380, 386–387, serine 405, alanine 423, and arginine 440; that span reads NY.

In the N-terminal section; belongs to the N-acetylglucosamine-1-phosphate uridyltransferase family. It in the C-terminal section; belongs to the transferase hexapeptide repeat family. In terms of assembly, homotrimer. The cofactor is Mg(2+).

Its subcellular location is the cytoplasm. The catalysed reaction is alpha-D-glucosamine 1-phosphate + acetyl-CoA = N-acetyl-alpha-D-glucosamine 1-phosphate + CoA + H(+). It carries out the reaction N-acetyl-alpha-D-glucosamine 1-phosphate + UTP + H(+) = UDP-N-acetyl-alpha-D-glucosamine + diphosphate. It functions in the pathway nucleotide-sugar biosynthesis; UDP-N-acetyl-alpha-D-glucosamine biosynthesis; N-acetyl-alpha-D-glucosamine 1-phosphate from alpha-D-glucosamine 6-phosphate (route II): step 2/2. Its pathway is nucleotide-sugar biosynthesis; UDP-N-acetyl-alpha-D-glucosamine biosynthesis; UDP-N-acetyl-alpha-D-glucosamine from N-acetyl-alpha-D-glucosamine 1-phosphate: step 1/1. The protein operates within bacterial outer membrane biogenesis; LPS lipid A biosynthesis. Its function is as follows. Catalyzes the last two sequential reactions in the de novo biosynthetic pathway for UDP-N-acetylglucosamine (UDP-GlcNAc). The C-terminal domain catalyzes the transfer of acetyl group from acetyl coenzyme A to glucosamine-1-phosphate (GlcN-1-P) to produce N-acetylglucosamine-1-phosphate (GlcNAc-1-P), which is converted into UDP-GlcNAc by the transfer of uridine 5-monophosphate (from uridine 5-triphosphate), a reaction catalyzed by the N-terminal domain. This is Bifunctional protein GlmU from Escherichia coli O7:K1 (strain IAI39 / ExPEC).